Reading from the N-terminus, the 398-residue chain is Aurofusarin biosynthesis regulatory protein aurR1 (398 aa).

Residues 18–45 (CDNCAKSKVRCGKEQPWCQRCERRGQVC) constitute a DNA-binding region (zn(2)-C6 fungal-type). 2 disordered regions span residues 52–73 (RSRK…GTPP) and 275–314 (AATI…SSLI). Composition is skewed to basic and acidic residues over residues 56-67 (RTLDAAHPESDQ) and 289-298 (DGKDTERSVS). Residues 299–311 (RDTNVSQDGSEPS) show a composition bias toward polar residues.

It localises to the nucleus. Its function is as follows. Transcription factor that specifically regulates the expression of the gene cluster that mediates the biosynthesis of aurofusarin, a red mycelium pigment which is acting as a mycotoxin. The polypeptide is Aurofusarin biosynthesis regulatory protein aurR1 (Gibberella zeae (strain ATCC MYA-4620 / CBS 123657 / FGSC 9075 / NRRL 31084 / PH-1) (Wheat head blight fungus)).